A 216-amino-acid polypeptide reads, in one-letter code: MKQDSRFPNLFITDHPLIQHKLTHMRDKDTSTRTFRELLREITLLMGYEITRNLPITTKRVETPLVAVDAPVIAGKKLAIVPVLRAGIGMSDGLLDLVPSARVGHIGVYRADDHRPVEYLVRLPDLEDRIFILCDPMVATGYSAVHAVDVLKRRNVPAANIMFVALVAAPEGVQVFQDAHPDVKLFVASLDSHLNEHAYIVPGLGDAGDRLFGTKN.

5-phospho-alpha-D-ribose 1-diphosphate is bound by residues R85, R110, and 135–143 (DPMVATGYS). Uracil-binding positions include I200 and 205-207 (GDA). D206 contacts 5-phospho-alpha-D-ribose 1-diphosphate.

This sequence belongs to the UPRTase family. Requires Mg(2+) as cofactor.

The enzyme catalyses UMP + diphosphate = 5-phospho-alpha-D-ribose 1-diphosphate + uracil. The protein operates within pyrimidine metabolism; UMP biosynthesis via salvage pathway; UMP from uracil: step 1/1. Its activity is regulated as follows. Allosterically activated by GTP. Its function is as follows. Catalyzes the conversion of uracil and 5-phospho-alpha-D-ribose 1-diphosphate (PRPP) to UMP and diphosphate. This chain is Uracil phosphoribosyltransferase, found in Burkholderia cenocepacia (strain ATCC BAA-245 / DSM 16553 / LMG 16656 / NCTC 13227 / J2315 / CF5610) (Burkholderia cepacia (strain J2315)).